The sequence spans 123 residues: Large ribosomal subunit protein bL19 (123 aa).

It belongs to the bacterial ribosomal protein bL19 family.

This protein is located at the 30S-50S ribosomal subunit interface and may play a role in the structure and function of the aminoacyl-tRNA binding site. The chain is Large ribosomal subunit protein bL19 (rplS) from Treponema pallidum (strain Nichols).